A 435-amino-acid chain; its full sequence is 3-phosphoshikimate 1-carboxyvinyltransferase (435 aa).

Positions 25, 26, and 30 each coordinate 3-phosphoshikimate. K25 is a phosphoenolpyruvate binding site. Phosphoenolpyruvate is bound by residues G99 and R130. 3-phosphoshikimate-binding residues include S176, S177, Q178, S204, D319, N342, and K346. Q178 is a binding site for phosphoenolpyruvate. D319 functions as the Proton acceptor in the catalytic mechanism. Residues R350, R394, and K419 each coordinate phosphoenolpyruvate.

It belongs to the EPSP synthase family. Monomer.

Its subcellular location is the cytoplasm. It catalyses the reaction 3-phosphoshikimate + phosphoenolpyruvate = 5-O-(1-carboxyvinyl)-3-phosphoshikimate + phosphate. Its pathway is metabolic intermediate biosynthesis; chorismate biosynthesis; chorismate from D-erythrose 4-phosphate and phosphoenolpyruvate: step 6/7. Functionally, catalyzes the transfer of the enolpyruvyl moiety of phosphoenolpyruvate (PEP) to the 5-hydroxyl of shikimate-3-phosphate (S3P) to produce enolpyruvyl shikimate-3-phosphate and inorganic phosphate. This Haemophilus ducreyi (strain 35000HP / ATCC 700724) protein is 3-phosphoshikimate 1-carboxyvinyltransferase.